Consider the following 139-residue polypeptide: Putative pre-16S rRNA nuclease (139 aa).

This sequence belongs to the YqgF nuclease family.

It localises to the cytoplasm. Its function is as follows. Could be a nuclease involved in processing of the 5'-end of pre-16S rRNA. This Streptococcus equi subsp. zooepidemicus (strain H70) protein is Putative pre-16S rRNA nuclease.